The chain runs to 200 residues: NAD(P)H dehydrogenase (quinone) (200 aa).

Positions 4–191 (VLVLYYSSYG…DIARYQGKHV (188 aa)) constitute a Flavodoxin-like domain. FMN contacts are provided by residues 10 to 15 (SSYGHV) and 79 to 81 (TRF). An NAD(+)-binding site is contributed by Tyr12. Trp99 is a binding site for substrate. Residues 114–120 (STGTQHG) and His135 each bind FMN.

Belongs to the WrbA family. It depends on FMN as a cofactor.

It catalyses the reaction a quinone + NADH + H(+) = a quinol + NAD(+). It carries out the reaction a quinone + NADPH + H(+) = a quinol + NADP(+). The chain is NAD(P)H dehydrogenase (quinone) from Burkholderia multivorans (strain ATCC 17616 / 249).